The primary structure comprises 338 residues: 5-dehydro-2-deoxygluconokinase (338 aa).

The protein belongs to the carbohydrate kinase PfkB family.

It catalyses the reaction 5-dehydro-2-deoxy-D-gluconate + ATP = 6-phospho-5-dehydro-2-deoxy-D-gluconate + ADP + H(+). Its pathway is polyol metabolism; myo-inositol degradation into acetyl-CoA; acetyl-CoA from myo-inositol: step 5/7. Catalyzes the phosphorylation of 5-dehydro-2-deoxy-D-gluconate (2-deoxy-5-keto-D-gluconate or DKG) to 6-phospho-5-dehydro-2-deoxy-D-gluconate (DKGP). The polypeptide is 5-dehydro-2-deoxygluconokinase (Mesomycoplasma hyopneumoniae (strain J / ATCC 25934 / NCTC 10110) (Mycoplasma hyopneumoniae)).